Here is a 304-residue protein sequence, read N- to C-terminus: D-alanine--D-alanine ligase (304 aa).

In terms of domain architecture, ATP-grasp spans 103–299 (KLIWQALGLP…FADLCIEILK (197 aa)). Residue 129-184 (EEKLGLPMFVKPAAEGSSVGVVKVKGKGRLKSVYEELKHLQGEIIAERFIGGGEYS) participates in ATP binding. Residues aspartate 253, glutamate 266, and asparagine 268 each contribute to the Mg(2+) site.

Belongs to the D-alanine--D-alanine ligase family. The cofactor is Mg(2+). Mn(2+) serves as cofactor.

It is found in the cytoplasm. The enzyme catalyses 2 D-alanine + ATP = D-alanyl-D-alanine + ADP + phosphate + H(+). The protein operates within cell wall biogenesis; peptidoglycan biosynthesis. Functionally, cell wall formation. This is D-alanine--D-alanine ligase from Neisseria meningitidis serogroup C / serotype 2a (strain ATCC 700532 / DSM 15464 / FAM18).